A 215-amino-acid polypeptide reads, in one-letter code: Calcium-binding protein 7 (215 aa).

Residues 1-188 (MPFHPVTAAL…QIRQTCVRKS (188 aa)) lie on the Cytoplasmic side of the membrane. 2 EF-hand domains span residues 33-68 (DELE…LGYM) and 69-104 (PNEV…KLST). 9 residues coordinate Ca(2+): aspartate 46, aspartate 48, asparagine 50, glutamate 57, aspartate 82, aspartate 84, aspartate 86, glutamine 88, and glutamate 93. Residues 189–209 (LICAFAIAFIISVMLIAANQV) traverse the membrane as a helical; Anchor for type IV membrane protein segment. The Extracellular segment spans residues 210–215 (LRSGMK).

In terms of assembly, interacts with PI4KB. This binding competes with FREQ/NCS1 binding in a calcium-dependent manner.

Its subcellular location is the golgi apparatus. The protein resides in the trans-Golgi network membrane. It is found in the cytoplasm. It localises to the perinuclear region. The protein localises to the cell membrane. In terms of biological role, negatively regulates Golgi-to-plasma membrane trafficking by interacting with PI4KB and inhibiting its activity. The polypeptide is Calcium-binding protein 7 (CABP7) (Homo sapiens (Human)).